The sequence spans 630 residues: MIYHEIYDVIVVGGGHAGTEAALAPARMGLKTLLLTHNVDTLGQMSCNPAIGGIGKGHLVKEIDAMGGLMAIAIDQAGIQFRTLNSSKGPAVRATRAQADRVLYRQAVRTALENQPNLDIFQQEVVDILVENNRAVGAVTKMGLTFKARSVVLTAGTFLAGKIHIGLDNYAGGRAGDPAATMLADRLRDLNLRVDRLKTGTPPRLDARTINFDVLAKQHGDAELPVMSFMGSVDLHPRQIPCHITHTNEQTHDLIRNSLDRSPMYTGIIEGIGPRYCPSIEDKVMRFSDRNSHQIYLEPEGLSTIEVYPNGISTSLPFDVQMGIVNSMKGLEKTRIIKPGYAIEYDYFDPRDLKPTLETKAIEGLFFAGQINGTTGYEEAAAQGLLAGINAALQVQGKEAWFPTRDLAYTGVLVDDLCTLGTKEPYRVFTSRAEYRLLLREDNADIRLTPIAHELGLIDDARWARFNQKMENIERERERLKQIWIHPQSEHLAVVNELVNSPLTREASGEDLLRRPEVTYDKLTQVAAFAPALDDKQAAEQVEISIKYQGYIEHQQNEIERHKRHENTLIPAEFDYDKVESLSNEVRAKLMQHRPVSIGQASRISGITPAAISILLVNLKKQGMLKRGEL.

Residue 13-18 (GGGHAG) participates in FAD binding. Position 273–287 (273–287 (GPRYCPSIEDKVMRF)) interacts with NAD(+).

Belongs to the MnmG family. As to quaternary structure, homodimer. Heterotetramer of two MnmE and two MnmG subunits. The cofactor is FAD.

The protein localises to the cytoplasm. NAD-binding protein involved in the addition of a carboxymethylaminomethyl (cmnm) group at the wobble position (U34) of certain tRNAs, forming tRNA-cmnm(5)s(2)U34. The sequence is that of tRNA uridine 5-carboxymethylaminomethyl modification enzyme MnmG from Actinobacillus pleuropneumoniae serotype 5b (strain L20).